We begin with the raw amino-acid sequence, 374 residues long: Ribosomal RNA large subunit methyltransferase G (374 aa).

This sequence belongs to the methyltransferase superfamily. RlmG family.

Its subcellular location is the cytoplasm. The catalysed reaction is guanosine(1835) in 23S rRNA + S-adenosyl-L-methionine = N(2)-methylguanosine(1835) in 23S rRNA + S-adenosyl-L-homocysteine + H(+). Specifically methylates the guanine in position 1835 (m2G1835) of 23S rRNA. The sequence is that of Ribosomal RNA large subunit methyltransferase G from Pseudomonas aeruginosa (strain UCBPP-PA14).